Reading from the N-terminus, the 325-residue chain is Eukaryotic translation initiation factor 3 subunit I (325 aa).

WD repeat units follow at residues G8–T47, G50–L89, C144–S183, E186–T225, and G283–E324.

The protein belongs to the eIF-3 subunit I family. As to quaternary structure, component of the eukaryotic translation initiation factor 3 (eIF-3) complex, which is composed of 13 subunits: eif3a, eif3b, eif3c, eif3d, eif3e, eif3f, eif3g, eif3h, eif3i, eif3j, eif3k, eif3l and eif3m.

It is found in the cytoplasm. Component of the eukaryotic translation initiation factor 3 (eIF-3) complex, which is involved in protein synthesis of a specialized repertoire of mRNAs and, together with other initiation factors, stimulates binding of mRNA and methionyl-tRNAi to the 40S ribosome. The eIF-3 complex specifically targets and initiates translation of a subset of mRNAs involved in cell proliferation. In Xenopus tropicalis (Western clawed frog), this protein is Eukaryotic translation initiation factor 3 subunit I (eif3i).